The chain runs to 630 residues: Putative polypeptide N-acetylgalactosaminyltransferase 10 (630 aa).

Over 1-6 the chain is Cytoplasmic; that stretch reads MNVDLR. A helical; Signal-anchor for type II membrane protein membrane pass occupies residues 7 to 26; that stretch reads LIVRLLLAILLTSLVTTILM. At 27-630 the chain is on the lumenal side; it reads GKQIHRRLVK…APYDPQREPH (604 aa). N-linked (GlcNAc...) asparagine glycans are attached at residues Asn72, Asn84, Asn146, and Asn168. Cystine bridges form between Cys157/Cys386, Cys377/Cys456, and Cys496/Cys513. The interval 166 to 277 is catalytic subdomain A; sequence LPNVTVIIAF…TNWLPPLLEP (112 aa). The substrate site is built by Asp207 and Arg238. Asp261 is a binding site for Mn(2+). A substrate-binding site is contributed by Ser262. Residue His263 coordinates Mn(2+). Residues 333 to 394 form a catalytic subdomain B region; the sequence is PYRTPVLSGA…PCARVGHIGK (62 aa). Position 363 (Trp363) interacts with substrate. His391 contributes to the Mn(2+) binding site. Residues 483–618 form the Ricin B-type lectin domain; the sequence is FSGVIESVAF…NQLEQQWKVG (136 aa). Asn525 is a glycosylation site (N-linked (GlcNAc...) asparagine). Disulfide bonds link Cys543-Cys559 and Cys586-Cys606.

Belongs to the glycosyltransferase 2 family. GalNAc-T subfamily. Mn(2+) serves as cofactor. During embryonic stages 9-11, weakly expressed in the mesoderm. During embryonic stages 12-13, very weak expression is observed in the somatic mesoderm region. No expression detected from stage 14-15. During embryonic stages 16-17, expressed in the epidermis and the antennomaxillary complex. In third instar larvae, expressed ubiquitously in wing, eye-antennal, leg and haltere imaginal disks.

It localises to the golgi apparatus membrane. The enzyme catalyses L-seryl-[protein] + UDP-N-acetyl-alpha-D-galactosamine = a 3-O-[N-acetyl-alpha-D-galactosaminyl]-L-seryl-[protein] + UDP + H(+). It catalyses the reaction L-threonyl-[protein] + UDP-N-acetyl-alpha-D-galactosamine = a 3-O-[N-acetyl-alpha-D-galactosaminyl]-L-threonyl-[protein] + UDP + H(+). It participates in protein modification; protein glycosylation. In terms of biological role, may catalyze the initial reaction in O-linked oligosaccharide biosynthesis, the transfer of an N-acetyl-D-galactosamine residue to a serine or threonine residue on the protein receptor. This Drosophila melanogaster (Fruit fly) protein is Putative polypeptide N-acetylgalactosaminyltransferase 10 (pgant10).